The following is a 494-amino-acid chain: UDP-glucose 6-dehydrogenase (494 aa).

NAD(+) is bound by residues glycine 11–glycine 16, aspartate 36, arginine 41, valine 89–threonine 93, and serine 130–valine 132. The disordered stretch occupies residues serine 88 to glutamate 110. The tract at residues lysine 129–arginine 135 is allosteric switch region. Glutamate 161 (proton donor/acceptor) is an active-site residue. Substrate-binding positions include glutamate 161–glutamate 165, lysine 220–asparagine 224, arginine 260, and lysine 267–glycine 273. Position 165 (glutamate 165) interacts with NAD(+). Catalysis depends on lysine 220, which acts as the Proton donor/acceptor. The Nucleophile role is filled by cysteine 276. Cysteine 276–lysine 279 is a binding site for NAD(+). Residues serine 321–threonine 325 are important for formation of active hexamer structure. Residue phenylalanine 338 to lysine 339 participates in substrate binding. Position 346 (arginine 346) interacts with NAD(+). Arginine 442 is a substrate binding site. The segment at valine 466–valine 494 is disordered.

The protein belongs to the UDP-glucose/GDP-mannose dehydrogenase family. As to quaternary structure, homohexamer.

It catalyses the reaction UDP-alpha-D-glucose + 2 NAD(+) + H2O = UDP-alpha-D-glucuronate + 2 NADH + 3 H(+). It functions in the pathway nucleotide-sugar biosynthesis; UDP-alpha-D-glucuronate biosynthesis; UDP-alpha-D-glucuronate from UDP-alpha-D-glucose: step 1/1. UDP-alpha-D-xylose (UDX) acts as a feedback inhibitor. It binds at the same site as the substrate, but functions as allosteric inhibitor by triggering a conformation change that disrupts the active hexameric ring structure and gives rise to an inactive, horseshoe-shaped hexamer. Catalyzes the formation of UDP-alpha-D-glucuronate, a constituent of complex glycosaminoglycans. Required for the biosynthesis of chondroitin sulfate and heparan sulfate. Required for embryonic development via its role in the biosynthesis of glycosaminoglycans. The protein is UDP-glucose 6-dehydrogenase (UGDH) of Gallus gallus (Chicken).